The following is a 154-amino-acid chain: 3-hydroxyacyl-[acyl-carrier-protein] dehydratase FabZ (154 aa).

Histidine 55 is a catalytic residue.

The protein belongs to the thioester dehydratase family. FabZ subfamily.

It localises to the cytoplasm. The catalysed reaction is a (3R)-hydroxyacyl-[ACP] = a (2E)-enoyl-[ACP] + H2O. Functionally, involved in unsaturated fatty acids biosynthesis. Catalyzes the dehydration of short chain beta-hydroxyacyl-ACPs and long chain saturated and unsaturated beta-hydroxyacyl-ACPs. The protein is 3-hydroxyacyl-[acyl-carrier-protein] dehydratase FabZ of Nitratidesulfovibrio vulgaris (strain DSM 19637 / Miyazaki F) (Desulfovibrio vulgaris).